A 351-amino-acid polypeptide reads, in one-letter code: DNA-directed RNA polymerase subunit alpha (351 aa).

Positions 1 to 236 (MSVNTKNWQE…DQLTLFVHFE (236 aa)) are alpha N-terminal domain (alpha-NTD). Positions 256-351 (DDANQLNRYL…AKKLEQELLG (96 aa)) are alpha C-terminal domain (alpha-CTD).

This sequence belongs to the RNA polymerase alpha chain family. As to quaternary structure, homodimer. The RNAP catalytic core consists of 2 alpha, 1 beta, 1 beta' and 1 omega subunit. When a sigma factor is associated with the core the holoenzyme is formed, which can initiate transcription.

The catalysed reaction is RNA(n) + a ribonucleoside 5'-triphosphate = RNA(n+1) + diphosphate. Functionally, DNA-dependent RNA polymerase catalyzes the transcription of DNA into RNA using the four ribonucleoside triphosphates as substrates. This chain is DNA-directed RNA polymerase subunit alpha, found in Erythrobacter litoralis (strain HTCC2594).